The sequence spans 424 residues: MTVSHPAHRVAMLCVHTSPLAQPGTGDAGGMNVYVVELARAMAAQGTEVEIFTRRTTANQPDVVEVDDGVLVRHVTAGPYEGLDKNDLPGQLCYFTQGVLRTEAARQPGWYDIVHSHYWLSGQAGWLAADRWNVPLVHTMHTMARVKNAQLAPGDAPEPRARIIGEEQVVEQSAALVANTDKEAHELHTLYAADPEKVHVVAPGVDLAAFTPPIDDHQRQAERVALGLAPEGDVIVFAGRIQPLKGPDVLVDALALLRSQQPDRPMPTLVIIGGPSGRPAALGELRARVFQRGVAQHVRFVPPADRPTLAQWMRVADYVAMPSRNESFGLVAIEAQACGTPVIAADVGGLTTAVAHKKSGLLVPDHRPQTWAGVLQVALGDTQLRESLRAGARRHAQQFTWDHTATDMLAVYERTRVAASVNTG.

1D-myo-inositol 3-phosphate is bound at residue H16. Residues 22–23 (QP) and G30 contribute to the UDP-N-acetyl-alpha-D-glucosamine site. Residues 27 to 32 (DAGGMN), K85, Y118, T142, and R162 contribute to the 1D-myo-inositol 3-phosphate site. Positions 240 and 245 each coordinate UDP-N-acetyl-alpha-D-glucosamine. Mg(2+)-binding residues include M313, R314, and A316. 2 residues coordinate UDP-N-acetyl-alpha-D-glucosamine: E326 and E334. T340 is a binding site for Mg(2+).

This sequence belongs to the glycosyltransferase group 1 family. MshA subfamily. Homodimer.

It carries out the reaction 1D-myo-inositol 3-phosphate + UDP-N-acetyl-alpha-D-glucosamine = 1D-myo-inositol 2-acetamido-2-deoxy-alpha-D-glucopyranoside 3-phosphate + UDP + H(+). Catalyzes the transfer of a N-acetyl-glucosamine moiety to 1D-myo-inositol 3-phosphate to produce 1D-myo-inositol 2-acetamido-2-deoxy-glucopyranoside 3-phosphate in the mycothiol biosynthesis pathway. The sequence is that of D-inositol 3-phosphate glycosyltransferase from Jonesia denitrificans (strain ATCC 14870 / DSM 20603 / BCRC 15368 / CIP 55.134 / JCM 11481 / NBRC 15587 / NCTC 10816 / Prevot 55134) (Listeria denitrificans).